The primary structure comprises 729 residues: Fatty acid oxidation complex subunit alpha (729 aa).

The enoyl-CoA hydratase/isomerase stretch occupies residues 1–189 (MLYKGDTLYL…KIGLVDGVVK (189 aa)). Residue aspartate 296 participates in substrate binding. Residues 311–729 (ETPKQAAVLG…ARPVGDLKTA (419 aa)) form a 3-hydroxyacyl-CoA dehydrogenase region. NAD(+) contacts are provided by residues methionine 324, aspartate 343, 400–402 (VVE), lysine 407, and serine 429. Catalysis depends on histidine 450, which acts as the For 3-hydroxyacyl-CoA dehydrogenase activity. Residue asparagine 453 coordinates NAD(+). Residues asparagine 500 and tyrosine 660 each contribute to the substrate site. The tract at residues 708 to 729 (RHNEPYYPPVEPARPVGDLKTA) is disordered.

In the N-terminal section; belongs to the enoyl-CoA hydratase/isomerase family. This sequence in the C-terminal section; belongs to the 3-hydroxyacyl-CoA dehydrogenase family. Heterotetramer of two alpha chains (FadB) and two beta chains (FadA).

It catalyses the reaction a (3S)-3-hydroxyacyl-CoA + NAD(+) = a 3-oxoacyl-CoA + NADH + H(+). It carries out the reaction a (3S)-3-hydroxyacyl-CoA = a (2E)-enoyl-CoA + H2O. The catalysed reaction is a 4-saturated-(3S)-3-hydroxyacyl-CoA = a (3E)-enoyl-CoA + H2O. The enzyme catalyses (3S)-3-hydroxybutanoyl-CoA = (3R)-3-hydroxybutanoyl-CoA. It catalyses the reaction a (3Z)-enoyl-CoA = a 4-saturated (2E)-enoyl-CoA. It carries out the reaction a (3E)-enoyl-CoA = a 4-saturated (2E)-enoyl-CoA. It functions in the pathway lipid metabolism; fatty acid beta-oxidation. In terms of biological role, involved in the aerobic and anaerobic degradation of long-chain fatty acids via beta-oxidation cycle. Catalyzes the formation of 3-oxoacyl-CoA from enoyl-CoA via L-3-hydroxyacyl-CoA. It can also use D-3-hydroxyacyl-CoA and cis-3-enoyl-CoA as substrate. In Escherichia coli (strain SMS-3-5 / SECEC), this protein is Fatty acid oxidation complex subunit alpha.